The primary structure comprises 108 residues: Nucleoid-associated protein GK0018 (108 aa).

The interval 1–32 (MMRGGMGNMQKMLKQMQKMQKEMQKAQEELAE) is disordered. A compositionally biased stretch (low complexity) spans 9–18 (MQKMLKQMQK). Residues 19 to 32 (MQKEMQKAQEELAE) show a composition bias toward basic and acidic residues.

Belongs to the YbaB/EbfC family. Homodimer.

The protein resides in the cytoplasm. Its subcellular location is the nucleoid. In terms of biological role, binds to DNA and alters its conformation. May be involved in regulation of gene expression, nucleoid organization and DNA protection. This is Nucleoid-associated protein GK0018 from Geobacillus kaustophilus (strain HTA426).